We begin with the raw amino-acid sequence, 211 residues long: PITH domain-containing protein CG6153 (211 aa).

The 173-residue stretch at 20–192 folds into the PITH domain; it reads DHALEMGIEY…GVTICNYESR (173 aa).

Belongs to the PITHD1 family.

The sequence is that of PITH domain-containing protein CG6153 from Drosophila melanogaster (Fruit fly).